We begin with the raw amino-acid sequence, 208 residues long: MFIKICGIKTPEELEIVESYGNATGVILECASKRRIGLETAKNLVNLSNIPVFAVSTTSEVLVWENIIKLTNTNYLQMHSDIDQKTIDFIKNEYGCFIMKSFKIPETSESPEIDAEKIISDIETYEVDRILLDTGKGCGQTHDHRISQIIAKKFDIILAGGLDPDNVFDIVKNVKPFGVDVSSGVEANNSKDEELIKRFCENVKSVKL.

The protein belongs to the TrpF family.

It carries out the reaction N-(5-phospho-beta-D-ribosyl)anthranilate = 1-(2-carboxyphenylamino)-1-deoxy-D-ribulose 5-phosphate. It functions in the pathway amino-acid biosynthesis; L-tryptophan biosynthesis; L-tryptophan from chorismate: step 3/5. This is N-(5'-phosphoribosyl)anthranilate isomerase from Methanococcus maripaludis (strain C7 / ATCC BAA-1331).